The primary structure comprises 265 residues: Indole-3-glycerol phosphate synthase (265 aa).

The protein belongs to the TrpC family.

It carries out the reaction 1-(2-carboxyphenylamino)-1-deoxy-D-ribulose 5-phosphate + H(+) = (1S,2R)-1-C-(indol-3-yl)glycerol 3-phosphate + CO2 + H2O. It functions in the pathway amino-acid biosynthesis; L-tryptophan biosynthesis; L-tryptophan from chorismate: step 4/5. The sequence is that of Indole-3-glycerol phosphate synthase from Syntrophobacter fumaroxidans (strain DSM 10017 / MPOB).